Here is a 380-residue protein sequence, read N- to C-terminus: Cytochrome b (380 aa).

4 consecutive transmembrane segments (helical) span residues 33 to 53 (FGSLLGLCLATQILTGLFLAM), 77 to 98 (WLIRNIHANGASFFFICIYMHI), 113 to 133 (WNIGVVLLLLTMMTAFVGYVL), and 178 to 198 (FFAFHFLFPFVIAAATVLHLL). Heme b contacts are provided by histidine 83 and histidine 97. Residues histidine 182 and histidine 196 each coordinate heme b. Histidine 201 is a binding site for a ubiquinone. 4 helical membrane-spanning segments follow: residues 226 to 246 (YKDLLGFVAMLLGLTSLALFA), 288 to 308 (LGGVLALLFSILVLMVVPILH), 320 to 340 (LTQFLFWALVADMLILTWIGG), and 347 to 367 (FIIIGQIASVIYFTIFLVLSP).

The protein belongs to the cytochrome b family. In terms of assembly, the cytochrome bc1 complex contains 3 respiratory subunits (MT-CYB, CYC1 and UQCRFS1), 2 core proteins (UQCRC1 and UQCRC2) and probably 6 low-molecular weight proteins. The cofactor is heme b.

The protein resides in the mitochondrion inner membrane. Functionally, component of the ubiquinol-cytochrome c reductase complex (complex III or cytochrome b-c1 complex) that is part of the mitochondrial respiratory chain. The b-c1 complex mediates electron transfer from ubiquinol to cytochrome c. Contributes to the generation of a proton gradient across the mitochondrial membrane that is then used for ATP synthesis. In Oncorhynchus keta (Chum salmon), this protein is Cytochrome b (mt-cyb).